Here is a 100-residue protein sequence, read N- to C-terminus: Small ribosomal subunit protein bS18 (100 aa).

A disordered region spans residues 1-23 (MTFIRKPAGQAKPQKYSTDAYGR).

Belongs to the bacterial ribosomal protein bS18 family. Part of the 30S ribosomal subunit. Forms a tight heterodimer with protein bS6.

Binds as a heterodimer with protein bS6 to the central domain of the 16S rRNA, where it helps stabilize the platform of the 30S subunit. The polypeptide is Small ribosomal subunit protein bS18 (Endomicrobium trichonymphae).